The primary structure comprises 461 residues: Na(+)/H(+) antiporter NhaA (461 aa).

The interval 1-23 is disordered; it reads MILSTQRLGRFMSPAPTPAPDAK. 12 helical membrane passes run 48–68, 89–109, 127–147, 157–177, 186–206, 211–231, 236–256, 257–277, 305–325, 339–359, 374–394, and 408–428; these read VGGA…NSPV, LSLG…LVGL, IVPV…YAAV, GWAI…AIIG, IFLL…IAFF, IQAA…FLAQ, FFGA…IVTW, ALVH…GFAV, ISAG…AVGG, IGII…TTWI, WIDV…SLLV, and HAKV…TVVL.

This sequence belongs to the NhaA Na(+)/H(+) (TC 2.A.33) antiporter family.

The protein localises to the cell membrane. The catalysed reaction is Na(+)(in) + 2 H(+)(out) = Na(+)(out) + 2 H(+)(in). Na(+)/H(+) antiporter that extrudes sodium in exchange for external protons. The chain is Na(+)/H(+) antiporter NhaA from Arthrobacter sp. (strain FB24).